The sequence spans 562 residues: 63 kDa globulin-like protein (562 aa).

The N-terminal stretch at 1-23 is a signal peptide; sequence MATRARATILLLLAAVLFAAAAA. Basic and acidic residues predominate over residues 63 to 88; sequence QQQQERRREHGGHDDDRRDRDRRGEG. Positions 63-103 are disordered; it reads QQQQERRREHGGHDDDRRDRDRRGEGSSEEEDEGRERGSRR. 2 consecutive Cupin type-1 domains span residues 106-264 and 312-507; these read YVFG…EKLE and FNIL…REVD. An N-linked (GlcNAc...) asparagine glycan is attached at Asn-350. 2 disordered regions span residues 383–430 and 516–550; these read PHLS…QVGQ and SAFLAGPEKSGRRGEESEDEDRRRRRSHRGRGDEA. A compositionally biased stretch (basic and acidic residues) spans 390-408; sequence RGGESEERRRERGKGKWRE. Positions 409-427 are enriched in acidic residues; that stretch reads EEEEEEEQQKGQEEEEEEQ.

Belongs to the 7S seed storage protein family.

It is found in the secreted. Its function is as follows. Seed storage protein. The chain is 63 kDa globulin-like protein from Oryza sativa subsp. japonica (Rice).